The chain runs to 266 residues: Small ribosomal subunit protein eS1 (266 aa).

The interval 235–266 (GGAGGAAKASGDDTGAKVERADGYEPPIQETV) is disordered. Residues 244-257 (SGDDTGAKVERADG) show a composition bias toward basic and acidic residues.

This sequence belongs to the eukaryotic ribosomal protein eS1 family. As to quaternary structure, component of the small ribosomal subunit. Mature ribosomes consist of a small (40S) and a large (60S) subunit. The 40S subunit contains about 33 different proteins and 1 molecule of RNA (18S). The 60S subunit contains about 49 different proteins and 3 molecules of RNA (28S, 5.8S and 5S).

It localises to the cytoplasm. Functionally, component of the small ribosomal subunit. The ribosome is a large ribonucleoprotein complex responsible for the synthesis of proteins in the cell. This chain is Small ribosomal subunit protein eS1 (rps3a), found in Oryzias latipes (Japanese rice fish).